Here is a 119-residue protein sequence, read N- to C-terminus: Large ribosomal subunit protein bL19 (119 aa).

It belongs to the bacterial ribosomal protein bL19 family.

This protein is located at the 30S-50S ribosomal subunit interface and may play a role in the structure and function of the aminoacyl-tRNA binding site. This chain is Large ribosomal subunit protein bL19, found in Limosilactobacillus fermentum (strain NBRC 3956 / LMG 18251) (Lactobacillus fermentum).